The chain runs to 187 residues: UPF0232 protein Mb0004 (187 aa).

Composition is skewed to basic and acidic residues over residues methionine 1–methionine 17 and alanine 35–arginine 45. Disordered stretches follow at residues methionine 1–aspartate 23, alanine 35–proline 75, and proline 168–glycine 187.

Belongs to the UPF0232 family.

The polypeptide is UPF0232 protein Mb0004 (Mycobacterium bovis (strain ATCC BAA-935 / AF2122/97)).